Here is a 513-residue protein sequence, read N- to C-terminus: ATP synthase subunit alpha (513 aa).

An ATP-binding site is contributed by glycine 169–threonine 176.

Belongs to the ATPase alpha/beta chains family. As to quaternary structure, F-type ATPases have 2 components, CF(1) - the catalytic core - and CF(0) - the membrane proton channel. CF(1) has five subunits: alpha(3), beta(3), gamma(1), delta(1), epsilon(1). CF(0) has three main subunits: a(1), b(2) and c(9-12). The alpha and beta chains form an alternating ring which encloses part of the gamma chain. CF(1) is attached to CF(0) by a central stalk formed by the gamma and epsilon chains, while a peripheral stalk is formed by the delta and b chains.

Its subcellular location is the cell inner membrane. It carries out the reaction ATP + H2O + 4 H(+)(in) = ADP + phosphate + 5 H(+)(out). Produces ATP from ADP in the presence of a proton gradient across the membrane. The alpha chain is a regulatory subunit. This is ATP synthase subunit alpha from Haemophilus influenzae (strain 86-028NP).